We begin with the raw amino-acid sequence, 674 residues long: MAGVLGSVVFWLIIGIHVTFLVFAQEGDHFVYYDFRNADLELDGMANTNHGPLHLTNNTNTGTGHAFYNIPIKFTASSLSSFSFSTEFVFAIFPLQKSTYGHGMAFVVSPTKDLRSNGSANSNLGIFNRANDNKTATHIFAVELDTNQNSESFDKGGNDVGIDINSIVSVESADASYFNARKGKNISLPLASGKSILVWIDYDGIEKVLNVTLAPVQTPKPDSPYFSSFIKPKVPLLSRSINLSEIFTETMYVGFSGSTGSIKSNQYILGWSFKQGGKAESLDISRLSNPPPSPKRFPLKEVLGATISTIAFLTLGGIVYLYKKKKYAEVLEQWEKEYSPQRYSFRILYKATKGFRENQLLGAGGFGKVYKGILPSGTQIAVKRVYHDAEQGMKQYVAEIASMGRLRHKNLVHLLGYCRRKGELLLVYDYMPNGSLDDYLFHKNKLKDLTWSQRVNIIKGVASALLYLHEEWEQVVLHRDIKASNILLDADLNGKLGDFGLARFHDRGVNLEATRVVGTIGYMAPELTAMGVTTTCTDVYAFGAFILEVVCGRRPVDPDAPREQVILVKWVASCGKRDALTDTVDSKLIDFKVEEAKLLLKLGMLCSQINPENRPSMRQILQYLEGNVSVPAISFGTVALGIPNISHETVTQMTTTSSSANFSFEDVTVLFGGR.

An N-terminal signal peptide occupies residues 1–24; that stretch reads MAGVLGSVVFWLIIGIHVTFLVFA. The Extracellular portion of the chain corresponds to 25–301; sequence QEGDHFVYYD…PSPKRFPLKE (277 aa). The legume-lectin like stretch occupies residues 28-274; it reads DHFVYYDFRN…NQYILGWSFK (247 aa). N-linked (GlcNAc...) asparagine glycosylation is found at N57, N117, N133, N185, N210, and N242. Residues 302–322 traverse the membrane as a helical segment; sequence VLGATISTIAFLTLGGIVYLY. Residues 323 to 674 lie on the Cytoplasmic side of the membrane; that stretch reads KKKKYAEVLE…EDVTVLFGGR (352 aa). Positions 355-633 constitute a Protein kinase domain; sequence FRENQLLGAG…LEGNVSVPAI (279 aa). ATP is bound by residues 361 to 369 and K383; that span reads LGAGGFGKV. Catalysis depends on D480, which acts as the Proton acceptor.

It in the C-terminal section; belongs to the protein kinase superfamily. Ser/Thr protein kinase family. This sequence in the N-terminal section; belongs to the leguminous lectin family.

It localises to the cell membrane. It catalyses the reaction L-seryl-[protein] + ATP = O-phospho-L-seryl-[protein] + ADP + H(+). The catalysed reaction is L-threonyl-[protein] + ATP = O-phospho-L-threonyl-[protein] + ADP + H(+). The protein is Probable L-type lectin-domain containing receptor kinase II.1 (LECRK21) of Arabidopsis thaliana (Mouse-ear cress).